Here is a 350-residue protein sequence, read N- to C-terminus: Glycogenin-1 (350 aa).

T2 carries the post-translational modification N-acetylthreonine. UDP-binding residues include L9, T11, N12, and Y15. The UDP-alpha-D-glucose site is built by L9, T11, N12, and Y15. Position 44 is a phosphoserine (S44). UDP is bound at residue R77. Residues R77, K86, D102, A103, D104, N133, S134, D160, D163, and Q164 each contribute to the UDP-alpha-D-glucose site. Positions 102, 103, and 104 each coordinate UDP. D102 contacts Mn(2+). Mn(2+) is bound at residue D104. O-linked (Glc...) tyrosine glycosylation occurs at Y195. UDP-binding residues include H212, G215, and K218. Position 212 (H212) interacts with Mn(2+). Residues G215 and K218 each coordinate UDP-alpha-D-glucose. Positions 301–333 (SHLSLGEIPAMAQPFVSSEERKERWEQGQADYM) are interaction with GYS1.

The protein belongs to the glycosyltransferase 8 family. Glycogenin subfamily. As to quaternary structure, part of the GYS1-GYG1 complex, a heterooctamer composed of a tetramer of GYS1 and 2 dimers of GYG1, where each GYS1 protomer binds to one GYG1 subunit (via GYG1 C-terminus); the GYS1 tetramer may dissociate from GYG1 dimers to continue glycogen polymerization on its own. May also form a heterooctamer complex with GYS2 (via GYG1 C-terminus). Requires Mn(2+) as cofactor. Post-translationally, self-glycosylated by the transfer of glucose residues from UDP-glucose to itself, forming an alpha-1,4-glycan of around 10 residues attached to Tyr-195. Phosphorylated. Highly expressed in skeletal muscle and heart, with lower levels in brain, lung, kidney and pancreas.

It is found in the cytoplasm. The protein localises to the nucleus. It carries out the reaction L-tyrosyl-[glycogenin] + UDP-alpha-D-glucose = alpha-D-glucosyl-L-tyrosyl-[glycogenin] + UDP + H(+). The catalysed reaction is [1,4-alpha-D-glucosyl](n)-L-tyrosyl-[glycogenin] + UDP-alpha-D-glucose = [1,4-alpha-D-glucosyl](n+1)-L-tyrosyl-[glycogenin] + UDP + H(+). The protein operates within glycan biosynthesis; glycogen biosynthesis. Inhibited by palladium ions. Glycogenin participates in the glycogen biosynthetic process along with glycogen synthase and glycogen branching enzyme. It catalyzes the formation of a short alpha (1,4)-glucosyl chain covalently attached via a glucose 1-O-tyrosyl linkage to internal tyrosine residues and these chains act as primers for the elongation reaction catalyzed by glycogen synthase. The sequence is that of Glycogenin-1 from Homo sapiens (Human).